Here is a 406-residue protein sequence, read N- to C-terminus: uncharacterized protein (406 aa).

The disordered stretch occupies residues 1–36; the sequence is MDRVRSLIGNRRGRRHNRQHPPYPHSGSPSTVNLLG.

It to yeast YMR316w.

This is an uncharacterized protein from Saccharomyces cerevisiae (strain ATCC 204508 / S288c) (Baker's yeast).